The following is a 58-amino-acid chain: UPF0391 membrane protein Bxeno_A2959 (58 aa).

2 consecutive transmembrane segments (helical) span residues 4-24 and 33-53; these read WALFFAVVAVIAGVLGFTGVA and FLFIVFVILCVVFLVLGFVVT.

The protein belongs to the UPF0391 family.

It localises to the cell membrane. The polypeptide is UPF0391 membrane protein Bxeno_A2959 (Paraburkholderia xenovorans (strain LB400)).